The primary structure comprises 1235 residues: Phosphorylase b kinase regulatory subunit alpha, liver isoform (1235 aa).

Serine 697, serine 731, and serine 737 each carry phosphoserine. The calmodulin-binding stretch occupies residues 808-838 (LSELYGKAGLNQEWGLIRYISGLLRKKVEVL). A compositionally biased stretch (low complexity) spans 976–986 (SSASSPAISIH). Residues 976–1002 (SSASSPAISIHEVGHTGVTKTERSGIN) form a disordered region. Phosphoserine occurs at positions 984, 1016, and 1044. Over residues 1032–1053 (AYSKSVRSSTPSSPTGTSSSDS) the composition is skewed to low complexity. A disordered region spans residues 1032–1060 (AYSKSVRSSTPSSPTGTSSSDSGGHHISW). The interval 1059 to 1099 (SWGERQGQWLRRRRLDGAINRVPVGFYQRVWKILQKCHGLS) is calmodulin-binding. Cysteine 1232 carries the S-farnesyl cysteine lipid modification.

Belongs to the phosphorylase b kinase regulatory chain family. As to quaternary structure, hexadecamer of 4 heterotetramers, each composed of alpha, beta, gamma, and delta subunits. Alpha (PHKA1 or PHKA2) and beta (PHKB) are regulatory subunits, gamma (PHKG1 or PHKG2) is the catalytic subunit, and delta is calmodulin. In terms of processing, although the final Cys may be farnesylated, the terminal tripeptide is probably not removed, and the C-terminus is not methylated. As to expression, predominantly expressed in liver and other non-muscle tissues.

The protein resides in the cell membrane. The protein operates within glycan biosynthesis; glycogen metabolism. By phosphorylation of various serine residues and by calcium. In terms of biological role, phosphorylase b kinase catalyzes the phosphorylation of serine in certain substrates, including troponin I. The alpha chain may bind calmodulin. The sequence is that of Phosphorylase b kinase regulatory subunit alpha, liver isoform (PHKA2) from Oryctolagus cuniculus (Rabbit).